We begin with the raw amino-acid sequence, 366 residues long: Homer protein homolog 1 (366 aa).

Position 2 is an N-acetylglycine (Gly2). The 109-residue stretch at 2–110 (GEQPIFSTRA…EKFQEFKEAA (109 aa)) folds into the WH1 domain. The tract at residues 114–189 (KEKSQEKMEL…RTQALSHASS (76 aa)) is disordered. 2 stretches are compositionally biased toward polar residues: residues 138 to 147 (SPLTPESING) and 155 to 170 (DVTQ…TQNA). Positions 193–364 (KHWEAELATL…LRDNLAKLLE (172 aa)) form a coiled coil. Residues 302–366 (KLQEVEIRNK…DNLAKLLECS (65 aa)) form a required for tetramerization region. Ser318 carries the phosphoserine modification.

Belongs to the Homer family. Tetramer; this tetrameric structure is critical for forming the high-order complex with SHANK1, which in turn is necessary for the structural and functional integrity of dendritic spines. Isoform 1, isoform 2 and isoform 3 encode a coiled-coil structure that mediates homo- and heteromultimerization. Interacts with GRM1, GRM5, ITPR1, DNM3, RYR1, RYR2 and SHANK3. Interacts with IFT57 and OPHN1. Interacts with SHANK1; forms high-order polymerized complex with a mesh-like network structure, at least composed of SHANK1, HOMER1 and DLGAP1; the complex formation is SHANK1 multimerization dependent. Interacts with NFATC4. Interacts with DAGLA (via PPXXF motif); this interaction is required for the cell membrane localization of DAGLA. Interacts with SRGAP2. Expressed in skeletal muscle at the level of the Z line, in the forebrain and cerebellum. In terms of tissue distribution, expressed in cardiac and skeletal muscle. As to expression, expressed in the hippocampus. Expressed in skeletal muscle at the level of the Z line, in the heart, forebrain and cerebellum.

It localises to the cytoplasm. It is found in the postsynaptic density. Its subcellular location is the synapse. The protein localises to the cell projection. The protein resides in the dendritic spine. In terms of biological role, postsynaptic density scaffolding protein. Binds and cross-links cytoplasmic regions of GRM1, GRM5, ITPR1, DNM3, RYR1, RYR2, SHANK1 and SHANK3. By physically linking GRM1 and GRM5 with ER-associated ITPR1 receptors, it aids the coupling of surface receptors to intracellular calcium release. May also couple GRM1 to PI3 kinase through its interaction with AGAP2. Isoform 1 regulates the trafficking and surface expression of GRM5. Differentially regulates the functions of the calcium activated channel ryanodine receptors RYR1 and RYR2. Isoform 1 decreases the activity of RYR2, and increases the activity of RYR1, whereas isoform 5 counteracts the effects by competing for binding sites. Isoform 3 regulates the trafficking and surface expression of GRM5. Isoform 5 acts as a natural dominant negative, in dynamic competition with constitutively expressed isoform 1, isoform 2 and isoform 3 to regulate synaptic metabotropic glutamate function. Isoform 5, may be involved in the structural changes that occur at synapses during long-lasting neuronal plasticity and development. Forms a high-order complex with SHANK1, which in turn is necessary for the structural and functional integrity of dendritic spines. Negatively regulates T cell activation by inhibiting the calcineurin-NFAT pathway. Acts by competing with calcineurin/PPP3CA for NFAT protein binding, hence preventing NFAT activation by PPP3CA. In Mus musculus (Mouse), this protein is Homer protein homolog 1.